The primary structure comprises 474 residues: 3-isopropylmalate dehydratase large subunit (474 aa).

Positions 353, 414, and 417 each coordinate [4Fe-4S] cluster.

It belongs to the aconitase/IPM isomerase family. LeuC type 1 subfamily. As to quaternary structure, heterodimer of LeuC and LeuD. The cofactor is [4Fe-4S] cluster.

It catalyses the reaction (2R,3S)-3-isopropylmalate = (2S)-2-isopropylmalate. Its pathway is amino-acid biosynthesis; L-leucine biosynthesis; L-leucine from 3-methyl-2-oxobutanoate: step 2/4. In terms of biological role, catalyzes the isomerization between 2-isopropylmalate and 3-isopropylmalate, via the formation of 2-isopropylmaleate. The sequence is that of 3-isopropylmalate dehydratase large subunit from Pseudomonas paraeruginosa (strain DSM 24068 / PA7) (Pseudomonas aeruginosa (strain PA7)).